The following is a 616-amino-acid chain: Dihydroxy-acid dehydratase (616 aa).

Residue D81 coordinates Mg(2+). C122 contributes to the [2Fe-2S] cluster binding site. Residues D123 and K124 each coordinate Mg(2+). K124 is subject to N6-carboxylysine. A [2Fe-2S] cluster-binding site is contributed by C195. E491 contacts Mg(2+). Residue S517 is the Proton acceptor of the active site.

The protein belongs to the IlvD/Edd family. Homodimer. The cofactor is [2Fe-2S] cluster. It depends on Mg(2+) as a cofactor.

It carries out the reaction (2R)-2,3-dihydroxy-3-methylbutanoate = 3-methyl-2-oxobutanoate + H2O. The catalysed reaction is (2R,3R)-2,3-dihydroxy-3-methylpentanoate = (S)-3-methyl-2-oxopentanoate + H2O. It participates in amino-acid biosynthesis; L-isoleucine biosynthesis; L-isoleucine from 2-oxobutanoate: step 3/4. It functions in the pathway amino-acid biosynthesis; L-valine biosynthesis; L-valine from pyruvate: step 3/4. In terms of biological role, functions in the biosynthesis of branched-chain amino acids. Catalyzes the dehydration of (2R,3R)-2,3-dihydroxy-3-methylpentanoate (2,3-dihydroxy-3-methylvalerate) into 2-oxo-3-methylpentanoate (2-oxo-3-methylvalerate) and of (2R)-2,3-dihydroxy-3-methylbutanoate (2,3-dihydroxyisovalerate) into 2-oxo-3-methylbutanoate (2-oxoisovalerate), the penultimate precursor to L-isoleucine and L-valine, respectively. The sequence is that of Dihydroxy-acid dehydratase from Salmonella typhi.